The following is a 617-amino-acid chain: tRNA uridine 5-carboxymethylaminomethyl modification enzyme MnmG (617 aa).

FAD contacts are provided by residues 9 to 14 (GAGHAG), Val121, and Thr176. 269–283 (GPRYCPSIEDKFVRF) is a binding site for NAD(+). Gln366 provides a ligand contact to FAD.

It belongs to the MnmG family. Homodimer. Heterotetramer of two MnmE and two MnmG subunits. It depends on FAD as a cofactor.

The protein resides in the cytoplasm. NAD-binding protein involved in the addition of a carboxymethylaminomethyl (cmnm) group at the wobble position (U34) of certain tRNAs, forming tRNA-cmnm(5)s(2)U34. This Acholeplasma laidlawii (strain PG-8A) protein is tRNA uridine 5-carboxymethylaminomethyl modification enzyme MnmG.